Reading from the N-terminus, the 236-residue chain is uncharacterized protein (236 aa).

7 helical membrane passes run 32-52 (MALALLLTGVAAITTISVEPI), 61-81 (FGTIIMFAPLGIALYFFMGFG), 90-110 (ILFWVYAGLTGMSLSYLALIY), 115-135 (IARTFFICSSVFGAMSLYGYS), 144-164 (GSFFAMGLIGLIIASLVNLFL), 167-187 (SSLSFATSLIGIVVFMGLIAW), and 208-228 (LSIMAAFTLYLDFINLFLYLM).

This sequence belongs to the BI1 family.

It is found in the cell membrane. This is an uncharacterized protein from Rickettsia prowazekii (strain Madrid E).